Consider the following 24-residue polypeptide: L-amino-acid oxidase (24 aa).

The protein belongs to the flavin monoamine oxidase family. FIG1 subfamily. As to quaternary structure, homodimer; non-covalently linked. Requires FAD as cofactor. In terms of processing, N-glycosylated. Expressed by the venom gland.

Its subcellular location is the secreted. The enzyme catalyses an L-alpha-amino acid + O2 + H2O = a 2-oxocarboxylate + H2O2 + NH4(+). Its function is as follows. Catalyzes an oxidative deamination of predominantly hydrophobic and aromatic L-amino acids, thus producing hydrogen peroxide that may contribute to the diverse toxic effects of this enzyme. Exhibits diverse biological activities, such as hemorrhage, hemolysis, edema, apoptosis, and antiparasitic activities. This protein has antibacterial activity (against E.coli, S.aureus, and B.dysenteriae), cytotoxic activity, as well as an ability to induce platelet aggregation. Effects of snake L-amino oxidases on platelets are controversial, since they either induce aggregation or inhibit agonist-induced aggregation. These different effects are probably due to different experimental conditions. The sequence is that of L-amino-acid oxidase from Protobothrops mucrosquamatus (Taiwan habu).